Here is a 422-residue protein sequence, read N- to C-terminus: Mannose-1-phosphate guanylyltransferase regulatory subunit alpha-B (422 aa).

A substrate-binding domain region spans residues 2–253; that stretch reads LKAIILIGGP…QHFWSQIKSA (252 aa). 2 residues coordinate GDP-alpha-D-mannose: glutamate 85 and glutamine 249. The interval 275–422 is hexapeptide repeat domain; that stretch reads LATNQGGTPK…NRSFKNQIIL (148 aa). A C-loop region spans residues 358 to 386; it reads TPSDPNPNDPYAKIDSETLFRDGGLTPSI.

The protein belongs to the transferase hexapeptide repeat family. Component of the GMPPA-GMPPB mannose-1-phosphate guanylyltransferase complex composed of 4 GMPPA subunits and 8 GMPPB subunits; the complex is organized into three layers, a central layer made up of 2 GMPPA dimers sandwiched between two layers each made up of 2 GMPPB dimers.

The protein operates within nucleotide-sugar biosynthesis; GDP-alpha-D-mannose biosynthesis; GDP-alpha-D-mannose from alpha-D-mannose 1-phosphate (GTP route): step 1/1. Regulatory subunit of the GMPPA-GMPPB mannose-1-phosphate guanylyltransferase complex; reduces the catalytic activity of GMPPB when part of the complex. Mediates allosteric feedback inhibition of GMPPB catalytic activity upon binding GDP-alpha-D-mannose. Together with GMPPB regulates GDP-alpha-D-mannose levels. One of two paralogs (gmppaa and gmppab) that may have redundant functions. The sequence is that of Mannose-1-phosphate guanylyltransferase regulatory subunit alpha-B (gmppab) from Danio rerio (Zebrafish).